The following is a 92-amino-acid chain: Small ribosomal subunit protein uS19 (92 aa).

The protein belongs to the universal ribosomal protein uS19 family.

Its function is as follows. Protein S19 forms a complex with S13 that binds strongly to the 16S ribosomal RNA. In Methylocella silvestris (strain DSM 15510 / CIP 108128 / LMG 27833 / NCIMB 13906 / BL2), this protein is Small ribosomal subunit protein uS19.